Reading from the N-terminus, the 183-residue chain is GTP cyclohydrolase 1 (183 aa).

3 residues coordinate Zn(2+): Cys-71, His-74, and Cys-142.

This sequence belongs to the GTP cyclohydrolase I family. In terms of assembly, toroid-shaped homodecamer, composed of two pentamers of five dimers.

The enzyme catalyses GTP + H2O = 7,8-dihydroneopterin 3'-triphosphate + formate + H(+). It functions in the pathway cofactor biosynthesis; 7,8-dihydroneopterin triphosphate biosynthesis; 7,8-dihydroneopterin triphosphate from GTP: step 1/1. In Leptospira borgpetersenii serovar Hardjo-bovis (strain JB197), this protein is GTP cyclohydrolase 1.